Here is a 497-residue protein sequence, read N- to C-terminus: Cytochrome P450 monooxygenase 151 (497 aa).

Residues 1 to 21 (MTDLVPVYYAFAGVVAALLFY) traverse the membrane as a helical segment. Asparagine 292 and asparagine 397 each carry an N-linked (GlcNAc...) asparagine glycan. Cysteine 441 contributes to the heme binding site.

The protein belongs to the cytochrome P450 family. Heme is required as a cofactor.

The protein resides in the membrane. Its pathway is secondary metabolite biosynthesis. Functionally, cytochrome P450 monooxygenase that is able to use dehydroabietic acid and testosterone as substrates for oxidation, suggesting that the natural substrate(s) may be structurally related to steroid compounds. This is Cytochrome P450 monooxygenase 151 from Postia placenta (strain ATCC 44394 / Madison 698-R) (Brown rot fungus).